The primary structure comprises 143 residues: MLNIQEIMAIIPHRYPFLLIDRILELEPGQRAVGEKLVTINEPFFQGHFPAHPIMPGVLIVEALAQTGAVAALSLPENRGKIAFFAGIDGVRFRKPVYPGDTLRLEVRFDKMRRGIGKGTGVATVDGQVVCEGELMFALHVER.

Histidine 48 is a catalytic residue.

Belongs to the thioester dehydratase family. FabZ subfamily.

The protein resides in the cytoplasm. It catalyses the reaction a (3R)-hydroxyacyl-[ACP] = a (2E)-enoyl-[ACP] + H2O. Involved in unsaturated fatty acids biosynthesis. Catalyzes the dehydration of short chain beta-hydroxyacyl-ACPs and long chain saturated and unsaturated beta-hydroxyacyl-ACPs. The protein is 3-hydroxyacyl-[acyl-carrier-protein] dehydratase FabZ of Roseiflexus castenholzii (strain DSM 13941 / HLO8).